Consider the following 544-residue polypeptide: Glucans biosynthesis protein G 1 (544 aa).

A signal peptide spans 1 to 33 (MVSLLRCQSFKPSSIICSLALSAAFALSGTAFA). Residues 36–58 (SKPAENKPATPVVSPPKATAPSA) form a disordered region.

It belongs to the OpgD/OpgG family.

The protein resides in the periplasm. It functions in the pathway glycan metabolism; osmoregulated periplasmic glucan (OPG) biosynthesis. Its function is as follows. Involved in the biosynthesis of osmoregulated periplasmic glucans (OPGs). This chain is Glucans biosynthesis protein G 1 (opgG1), found in Shewanella oneidensis (strain ATCC 700550 / JCM 31522 / CIP 106686 / LMG 19005 / NCIMB 14063 / MR-1).